The sequence spans 1074 residues: Transmembrane protein 132E (1074 aa).

An N-terminal signal peptide occupies residues 1-25; that stretch reads MAPGMSGRGGAALLCLSALLAHASG. Residues 26 to 893 lie on the Extracellular side of the membrane; it reads RSHPASPSPP…LTDLEIGMYA (868 aa). Residues asparagine 70 and asparagine 91 are each glycosylated (N-linked (GlcNAc...) asparagine). Disordered regions lie at residues 202–226 and 241–264; these read PPAP…ATGE and ASGG…ESPT. Gly residues predominate over residues 243-256; that stretch reads GGCGGSRRGAGPGV. Asparagine 318 and asparagine 399 each carry an N-linked (GlcNAc...) asparagine glycan. Disordered stretches follow at residues 563–585 and 814–867; these read RSVR…ASRG and GRDE…VPPT. The span at 841–862 shows a compositional bias: low complexity; it reads GAGPPGSALPAPEAPGPGTASP. Residues 894–914 traverse the membrane as a helical segment; it reads LLGVFCLAILVFLINCIVFVL. At 915 to 1074 the chain is on the cytoplasmic side; that stretch reads RYRHKRIPPE…NYMRRIKEIA (160 aa). The segment at 946–1063 is disordered; the sequence is VQGELSPPAG…PTRPTAPPDL (118 aa). The span at 972–984 shows a compositional bias: low complexity; that stretch reads SGSSQTSVQSQVH. Residues 1034–1044 show a composition bias toward acidic residues; it reads GEEDEEEEEDL.

It belongs to the TMEM132 family.

It is found in the membrane. In terms of biological role, required for normal inner ear hair cell function and hearing. This chain is Transmembrane protein 132E, found in Homo sapiens (Human).